A 341-amino-acid chain; its full sequence is Galactofuranose transporter permease protein YtfT (341 aa).

Over 1–25 the chain is Cytoplasmic; sequence MMPQSLPDTTTPKRRFRWPTGMPQL. A helical membrane pass occupies residues 26–46; the sequence is VALLLVLLVDSLVAPHFWQVV. Residues 47–65 are Periplasmic-facing; sequence LQDGRLFGSPIDILNRAAP. 2 helical membrane passes run 66-86 and 87-107; these read VALLAIGMTLVIATGGIDLSV and GAVMAIAGATTAAMTVAGFSL. P108 is a topological domain (periplasmic). A helical transmembrane segment spans residues 109–129; the sequence is IVLLSALGTGILAGLWNGILV. Topologically, residues 130-136 are cytoplasmic; sequence AILKIQP. The chain crosses the membrane as a helical span at residues 137–157; it reads FVATLILMVAGRGVAQLITAG. Topologically, residues 158 to 174 are periplasmic; that stretch reads QIVTFNSPDLSWFGSGS. A helical membrane pass occupies residues 175–195; it reads LLFLPTPVIIAVLTLILFWLL. The Cytoplasmic segment spans residues 196–223; the sequence is TRKTALGMFIEAVGINIRAAKNAGVNTR. Residues 224-244 traverse the membrane as a helical segment; it reads IIVMLTYVLSGLCAAIAGIIV. Residues 245–255 lie on the Periplasmic side of the membrane; sequence AADIRGADANN. The chain crosses the membrane as a helical span at residues 256–276; sequence AGLWLELDAILAVVIGGGSLM. Residues 277–281 lie on the Cytoplasmic side of the membrane; the sequence is GGRFN. The next 2 helical transmembrane spans lie at 282–302 and 303–323; these read LLLSVVGALIIQGMNTGILLS and GFPPEMNQVVKAVVVLCVLIV. At 324–341 the chain is on the cytoplasmic side; that stretch reads QSQRFISLIKGVRSRDKT.

Belongs to the binding-protein-dependent transport system permease family. AraH/RbsC subfamily. In terms of assembly, the complex is composed of two ATP-binding proteins (YtfR), two transmembrane proteins (YtfT and YjfF) and a solute-binding protein (YtfQ).

The protein resides in the cell inner membrane. Part of the ABC transporter complex YtfQRT-YjfF involved in galactofuranose transport. Probably responsible for the translocation of the substrate across the membrane. The chain is Galactofuranose transporter permease protein YtfT (ytfT) from Escherichia coli (strain K12).